We begin with the raw amino-acid sequence, 497 residues long: Transcription termination/antitermination protein NusA (497 aa).

The region spanning 135-200 (GKILTGIVKK…RGAQLFVTRS (66 aa)) is the S1 motif domain. In terms of domain architecture, KH spans 302–372 (RHTIDIAVDS…LKIDQKISNI (71 aa)). Repeat copies occupy residues 364 to 414 (KIDQ…KKAL) and 439 to 489 (GMNQ…RNIC). The 2 X 51 AA approximate repeats stretch occupies residues 364-489 (KIDQKISNIL…MLIMAARNIC (126 aa)).

Belongs to the NusA family. As to quaternary structure, monomer. Binds directly to the core enzyme of the DNA-dependent RNA polymerase and to nascent RNA.

Its subcellular location is the cytoplasm. Its function is as follows. Participates in both transcription termination and antitermination. The chain is Transcription termination/antitermination protein NusA from Buchnera aphidicola subsp. Baizongia pistaciae (strain Bp).